The chain runs to 76 residues: Small ribosomal subunit protein bS21C (76 aa).

Positions 52–76 (GRQRKLARKQMQREGLLPTKPRKDK) are disordered.

Belongs to the bacterial ribosomal protein bS21 family.

The chain is Small ribosomal subunit protein bS21C (rpsU3) from Agrobacterium fabrum (strain C58 / ATCC 33970) (Agrobacterium tumefaciens (strain C58)).